Here is a 1693-residue protein sequence, read N- to C-terminus: Non-structural polyprotein pORF1 (1693 aa).

The 185-residue stretch at 56-240 folds into the Alphavirus-like MT domain; sequence VFRPEVFWNH…HDVSNLRSWI (185 aa). A methyltransferase region spans residues 60-240; the sequence is EVFWNHPIQR…HDVSNLRSWI (181 aa). The Y-domain stretch occupies residues 241–439; sequence RTTKVTGDHP…FYAQCRRWLS (199 aa). A disulfide bridge connects residues Cys434 and Cys481. Positions 442 to 509 are putative protease; it reads FHLDPRVLVF…EAYEGSDVDP (68 aa). Residues 510–691 form a zinc-binding region; the sequence is AESAISDISG…FSPGHVWESA (182 aa). Positions 671, 673, and 686 each coordinate Zn(2+). Residues 712–778 form a hinge region; that stretch reads SSPARPDLGF…AITHQTARHR (67 aa). The segment at 732–768 is disordered; it reads ATPTLAAPLPPPAPDPSPPPSAPALAEPASGATAGAP. Pro residues predominate over residues 739 to 753; the sequence is PLPPPAPDPSPPPSA. The span at 754–768 shows a compositional bias: low complexity; it reads PALAEPASGATAGAP. The Macro domain maps to 775–921; sequence ARHRRLLFTY…LYLPELAARW (147 aa). Residues 785–942 form an X-domain region; sequence PDGSKVFAGS…TITEDVARTA (158 aa). A (+)RNA virus helicase ATP-binding domain is found at 934–1082; it reads ITEDVARTAN…RPDLGPTSWW (149 aa). The NTPase/helicase stretch occupies residues 960 to 1204; sequence GCRVTPGVVQ…ISDAIVNNFF (245 aa). 975-982 is an ATP binding site; that stretch reads GVPGSGKS. The (+)RNA virus helicase C-terminal domain maps to 1083–1216; that stretch reads HVTHRWPADV…GGEIGHQRPS (134 aa). An RNA-directed RNA polymerase region spans residues 1207 to 1693; the sequence is GGEIGHQRPS…LTNSILCRVE (487 aa). The region spanning 1454-1565 is the RdRp catalytic domain; it reads SMVFENDFSE…LCSEYRQSPG (112 aa).

This sequence belongs to the hepevirus non-structural polyprotein family. As to quaternary structure, the protease domain interacts with host EIF2AK4 (via C-terminus); this interaction inhibits dimerization of EIF2AK4 and prevents EIF2AK4-mediated phosphorylation of host EIF2A. Mg(2+) serves as cofactor. Post-translationally, ORF1 polyprotein does not seem to be processed into distinct enzymatic domains by a viral protease belonging to ORF1, but could be processed by a host serine protease like thrombin.

The protein resides in the host cytoplasm. The protein localises to the host perinuclear region. It carries out the reaction RNA(n) + a ribonucleoside 5'-triphosphate = RNA(n+1) + diphosphate. The enzyme catalyses GTP + S-adenosyl-L-methionine = N(7)-methyl-GTP + S-adenosyl-L-homocysteine. Its activity is regulated as follows. Putative protease: Inhibited by chymostatin. Methyltransferase: Displays a capping enzyme activity. This function is necessary since all viral RNAs are synthesized in the cytoplasm, and host capping enzymes are restricted to the nucleus. The enzymatic reaction involves a covalent link between 7-methyl-GMP and the methyltransferase, whereas eukaryotic capping enzymes form a covalent complex only with GMP. Methyltransferase catalyzes transfer of a methyl group from S-adenosylmethionine to GTP and GDP to yield m(7)GTP or m(7)GDP. GDP is a better substrate than GTP. This enzyme also displays guanylyltransferase activity to form a covalent complex, methyltransferase-m(7)GMP, from which 7-methyl-GMP is transferred to the mRNA to create the cap structure. In terms of biological role, Y-domain: Indispensable for virus replication. Its function is as follows. Putative protease: The putative protease domain although necessary for replication of the virus may not be a protease but rather a structural Zn(2+)-binding domain. Inhibits induction of IFN-beta by MDA5 and RIG-I pathways and down-regulates the expression of MDA5. Functionally, NTPase/helicase: Multi-functional protein that exhibits NTPase and RNA unwinding activities. Hydrolyzes all NTPs efficiently and unwinds RNA duplexes containing 5' overhangs. Possesses a sequence independent RNA-5'-triphosphatase (RTPase) activity suggestive of its role in forming viral cap structure. Also participates in viral genome replication, RNA translocation and genome packaging/unpackaging. RNA-directed RNA polymerase: Plays an essential role in the virus replication. Binds to the 3'-end of the genomic RNA to initiate viral replication. The polypeptide is Non-structural polyprotein pORF1 (Homo sapiens (Human)).